Here is a 95-residue protein sequence, read N- to C-terminus: DNA-directed RNA polymerase subunit Rpo6 (95 aa).

It belongs to the archaeal Rpo6/eukaryotic RPB6 RNA polymerase subunit family. Part of the RNA polymerase complex.

It localises to the cytoplasm. It catalyses the reaction RNA(n) + a ribonucleoside 5'-triphosphate = RNA(n+1) + diphosphate. In terms of biological role, DNA-dependent RNA polymerase (RNAP) catalyzes the transcription of DNA into RNA using the four ribonucleoside triphosphates as substrates. In Saccharolobus islandicus (strain M.16.27) (Sulfolobus islandicus), this protein is DNA-directed RNA polymerase subunit Rpo6.